The primary structure comprises 438 residues: Cyclic 2,3-diphosphoglycerate synthetase (438 aa).

The protein belongs to the cyclic 2,3-diphosphoglycerate synthetase family.

It localises to the cytoplasm. It carries out the reaction (2R)-2,3-bisphosphoglycerate + ATP + H(+) = cyclic (2R)-2,3-bisphosphoglycerate + ADP + phosphate. Functionally, catalyzes the formation of cyclic 2,3-diphosphoglycerate (cDPG) by formation of an intramolecular phosphoanhydride bond at the expense of ATP. The polypeptide is Cyclic 2,3-diphosphoglycerate synthetase (Thermococcus gammatolerans (strain DSM 15229 / JCM 11827 / EJ3)).